A 1238-amino-acid chain; its full sequence is Protein MMS22-like (1238 aa).

It belongs to the MMS22 family. MMS22L subfamily. In terms of assembly, component of the MMS22L-TONSL complex, a complex at least composed of MMS22L and TONSL/NFKBIL2. Interacts with RAD51; interaction is direct. Post-translationally, degraded by the ubiquitin-proteasome system upon replication stress.

It localises to the nucleus. It is found in the chromosome. Component of the MMS22L-TONSL complex, a complex that promotes homologous recombination-mediated repair of double-strand breaks (DSBs) at stalled or collapsed replication forks. The MMS22L-TONSL complex is required to maintain genome integrity during DNA replication. It mediates the assembly of RAD51 filaments on single-stranded DNA (ssDNA): the MMS22L-TONSL complex is recruited to DSBs following histone replacement by histone chaperones and eviction of the replication protein A complex (RPA/RP-A) from DSBs. Following recruitment to DSBs, the TONSL-MMS22L complex promotes recruitment of RAD51 filaments and subsequent homologous recombination. Within the complex, MMS22L acts by binding ssDNA. The sequence is that of Protein MMS22-like (Mms22l) from Mus musculus (Mouse).